Reading from the N-terminus, the 241-residue chain is NLP effector protein 7 (241 aa).

A signal peptide spans 1–19; it reads MHLCALLIAAAGVLASVRA. Positions 105–115 match the Conserved undecapeptide motif motif; sequence AIMYAWYFPKA. A Conserved heptapeptide motif motif is present at residues 125-131; that stretch reads GSRHYWL. N144 is a glycosylation site (N-linked (GlcNAc...) asparagine).

Belongs to the Necrosis inducing protein (NPP1) family.

Its subcellular location is the secreted. Functionally, secreted effector that acts as a pathogen-associated molecular pattern (PAMP) recognized by the plant immune system. Induces necrosis in Nicotiana benthamiana leaves and can induce Phytophthora capsici resistance in Nicotiana benthamiana. Also significantly improves disease resistance of Arabidopsis thaliana to Hyaloperonospora arabidopsidis. causes an inhibition of plant growth which is typically associated with enhanced immunity when over-expressed in Arabidopsis. The protein is NLP effector protein 7 of Plasmopara viticola (Downy mildew of grapevine).